The sequence spans 693 residues: Polyribonucleotide nucleotidyltransferase (693 aa).

Positions 489 and 495 each coordinate Mg(2+). Residues 556 to 615 form the KH domain; the sequence is PQIHVMNINPAKIKDVVGRGGATVKGIVEKTGAQIDTSDSGEVKVFAKDKKSMDMAVAMI. The 69-residue stretch at 625–693 folds into the S1 motif domain; the sequence is GQVYKGKIVK…GRVKLSLVAR (69 aa).

The protein belongs to the polyribonucleotide nucleotidyltransferase family. In terms of assembly, component of the RNA degradosome, which is a multiprotein complex involved in RNA processing and mRNA degradation. Requires Mg(2+) as cofactor.

Its subcellular location is the cytoplasm. It catalyses the reaction RNA(n+1) + phosphate = RNA(n) + a ribonucleoside 5'-diphosphate. In terms of biological role, involved in mRNA degradation. Catalyzes the phosphorolysis of single-stranded polyribonucleotides processively in the 3'- to 5'-direction. This is Polyribonucleotide nucleotidyltransferase from Francisella tularensis subsp. novicida (strain U112).